A 272-amino-acid chain; its full sequence is Putative MgpC-like protein MPN_102 (272 aa).

It belongs to the MgpC family.

The chain is Putative MgpC-like protein MPN_102 from Mycoplasma pneumoniae (strain ATCC 29342 / M129 / Subtype 1) (Mycoplasmoides pneumoniae).